Here is a 164-residue protein sequence, read N- to C-terminus: Large ribosomal subunit protein bL9 (164 aa).

This sequence belongs to the bacterial ribosomal protein bL9 family.

Its function is as follows. Binds to the 23S rRNA. The protein is Large ribosomal subunit protein bL9 of Psychrobacter sp. (strain PRwf-1).